A 346-amino-acid polypeptide reads, in one-letter code: D-amino-acid oxidase (346 aa).

Residues Gly22, Ile24, Thr52, Thr53, Ser54, Ala58, Ala59, Leu60, and Thr187 each contribute to the FAD site. D-proline is bound by residues Tyr227 and Arg284. D-serine is bound by residues Tyr227 and Arg284. FAD is bound by residues Arg284, Gly311, Gly312, Gly314, and Thr316. Arg284 is a binding site for D-dopa. D-proline is bound at residue Gly312. Gly312 contributes to the D-serine binding site. Gly312 serves as a coordination point for D-dopa. A Microbody targeting signal motif is present at residues 344–346; sequence SKL.

This sequence belongs to the DAMOX/DASOX family. The cofactor is FAD.

The protein localises to the peroxisome matrix. It carries out the reaction a D-alpha-amino acid + O2 + H2O = a 2-oxocarboxylate + H2O2 + NH4(+). The enzyme catalyses D-serine + O2 + H2O = 3-hydroxypyruvate + H2O2 + NH4(+). It catalyses the reaction D-phenylalanine + O2 + H2O = 3-phenylpyruvate + H2O2 + NH4(+). The catalysed reaction is D-alanine + O2 + H2O = pyruvate + H2O2 + NH4(+). It carries out the reaction D-arginine + O2 + H2O = 5-guanidino-2-oxopentanoate + H2O2 + NH4(+). The enzyme catalyses D-methionine + O2 + H2O = 4-methylsulfanyl-2-oxobutanoate + H2O2 + NH4(+). It catalyses the reaction D-ornithine + O2 + H2O = 5-amino-2-oxopentanoate + H2O2 + NH4(+). The catalysed reaction is D-leucine + O2 + H2O = 4-methyl-2-oxopentanoate + H2O2 + NH4(+). It carries out the reaction D-lysine + O2 + H2O = 6-amino-2-oxohexanoate + H2O2 + NH4(+). The enzyme catalyses D-proline + O2 = 1-pyrroline-2-carboxylate + H2O2. It catalyses the reaction D-valine + O2 + H2O = 3-methyl-2-oxobutanoate + H2O2 + NH4(+). The catalysed reaction is D-histidine + O2 + H2O = 3-(imidazol-5-yl)pyruvate + H2O2 + NH4(+). Functionally, catalyzes the oxidative deamination of D-amino acids with broad substrate specificity. Has low in vitro and no in vivo activity on D-serine; primary D-serine degradation is performed by the D-serine dehydratase dsd. This is D-amino-acid oxidase (ddo-1) from Dictyostelium discoideum (Social amoeba).